The following is a 429-amino-acid chain: Endoglucanase A (429 aa).

The signal sequence occupies residues 1-34 (MVSKKQKFLTVILVIVLAIVIVGGVFGISFVKGR). Residues 46–94 (AKTEQVKEPAKEEPKLVIKEKKQDESAKKEQELKKAKEEAEAAVEKETE) show a composition bias toward basic and acidic residues. Residues 46–100 (AKTEQVKEPAKEEPKLVIKEKKQDESAKKEQELKKAKEEAEAAVEKETEKTEEEP) are disordered. Glutamate 249 acts as the Proton donor in catalysis. Residue glutamate 334 is the Nucleophile of the active site.

Belongs to the glycosyl hydrolase 5 (cellulase A) family.

The enzyme catalyses Endohydrolysis of (1-&gt;4)-beta-D-glucosidic linkages in cellulose, lichenin and cereal beta-D-glucans.. In Butyrivibrio fibrisolvens, this protein is Endoglucanase A (celA).